A 313-amino-acid chain; its full sequence is MEKRKIILDCDPGHDDAIAIMMAAKHPAIDLLGITIVAGNQTLDKTLINGLNVCQKLEINVPVYAGMPQPIMRQQIVADNIHGETGLDGPVFEPLTRQAENTHAVKYIIDTLMASDGDITLVPVGPLSNIAVAMRMQPAILPKIREIVLMGGAYGTGNFTPSAEFNIFADPEAARVVFTSGVPLVMMGLDLTNQTVCTPDVIARMERAGGPAGELFSDIMNFTLKTQFENYGLAGGPVHDATCIGYLINPDGIKTQEMYVEVDVNSGPCYGRTVCDELGVLGKPANTKVGITIDTDWFWGLVEECVRGYIKTH.

The Proton acceptor role is filled by aspartate 11. Residues aspartate 11, aspartate 16, and valine 124 each contribute to the Ca(2+) site. Residues glutamine 227 and histidine 239 each contribute to the substrate site. Aspartate 240 is a binding site for Ca(2+).

The protein belongs to the IUNH family. RihB subfamily. Homotetramer. It depends on Ca(2+) as a cofactor.

It catalyses the reaction a pyrimidine ribonucleoside + H2O = a pyrimidine nucleobase + D-ribose. Hydrolyzes cytidine or uridine to ribose and cytosine or uracil, respectively. Has a clear preference for cytidine over uridine. Strictly specific for ribonucleosides. This chain is Pyrimidine-specific ribonucleoside hydrolase RihB, found in Escherichia coli O1:K1 / APEC.